The sequence spans 357 residues: Aspartate carbamoyltransferase catalytic subunit (357 aa).

The segment covering 1 to 17 has biased composition (polar residues); the sequence is MSNSIDSQSIPTISPTD. A disordered region spans residues 1-21; sequence MSNSIDSQSIPTISPTDYTKF. Residues R97 and T98 each contribute to the carbamoyl phosphate site. L-aspartate is bound at residue K125. Carbamoyl phosphate is bound by residues R147, H177, and Q180. Positions 211 and 266 each coordinate L-aspartate. G307 and P308 together coordinate carbamoyl phosphate.

This sequence belongs to the aspartate/ornithine carbamoyltransferase superfamily. ATCase family. In terms of assembly, heterododecamer (2C3:3R2) of six catalytic PyrB chains organized as two trimers (C3), and six regulatory PyrI chains organized as three dimers (R2).

The catalysed reaction is carbamoyl phosphate + L-aspartate = N-carbamoyl-L-aspartate + phosphate + H(+). Its pathway is pyrimidine metabolism; UMP biosynthesis via de novo pathway; (S)-dihydroorotate from bicarbonate: step 2/3. In terms of biological role, catalyzes the condensation of carbamoyl phosphate and aspartate to form carbamoyl aspartate and inorganic phosphate, the committed step in the de novo pyrimidine nucleotide biosynthesis pathway. This is Aspartate carbamoyltransferase catalytic subunit from Psychrobacter arcticus (strain DSM 17307 / VKM B-2377 / 273-4).